The following is a 157-amino-acid chain: Ribosome maturation factor RimP (157 aa).

Belongs to the RimP family.

It localises to the cytoplasm. Its function is as follows. Required for maturation of 30S ribosomal subunits. This is Ribosome maturation factor RimP from Geobacillus kaustophilus (strain HTA426).